A 351-amino-acid chain; its full sequence is Nicotinate-nucleotide--dimethylbenzimidazole phosphoribosyltransferase (351 aa).

The Proton acceptor role is filled by glutamate 313.

This sequence belongs to the CobT family.

It catalyses the reaction 5,6-dimethylbenzimidazole + nicotinate beta-D-ribonucleotide = alpha-ribazole 5'-phosphate + nicotinate + H(+). The protein operates within nucleoside biosynthesis; alpha-ribazole biosynthesis; alpha-ribazole from 5,6-dimethylbenzimidazole: step 1/2. Its function is as follows. Catalyzes the synthesis of alpha-ribazole-5'-phosphate from nicotinate mononucleotide (NAMN) and 5,6-dimethylbenzimidazole (DMB). The polypeptide is Nicotinate-nucleotide--dimethylbenzimidazole phosphoribosyltransferase (Mycobacterium leprae (strain Br4923)).